Here is a 115-residue protein sequence, read N- to C-terminus: Large ribosomal subunit protein bL20 (115 aa).

Belongs to the bacterial ribosomal protein bL20 family.

Functionally, binds directly to 23S ribosomal RNA and is necessary for the in vitro assembly process of the 50S ribosomal subunit. It is not involved in the protein synthesizing functions of that subunit. The polypeptide is Large ribosomal subunit protein bL20 (Chlorobaculum tepidum (strain ATCC 49652 / DSM 12025 / NBRC 103806 / TLS) (Chlorobium tepidum)).